We begin with the raw amino-acid sequence, 112 residues long: Phosphoribosyl-AMP cyclohydrolase (112 aa).

Asp76 contributes to the Mg(2+) binding site. Residue Cys77 coordinates Zn(2+). Residues Asp78 and Asp80 each contribute to the Mg(2+) site. Residues Cys93 and Cys100 each coordinate Zn(2+).

Belongs to the PRA-CH family. As to quaternary structure, homodimer. Requires Mg(2+) as cofactor. Zn(2+) is required as a cofactor.

It localises to the cytoplasm. The enzyme catalyses 1-(5-phospho-beta-D-ribosyl)-5'-AMP + H2O = 1-(5-phospho-beta-D-ribosyl)-5-[(5-phospho-beta-D-ribosylamino)methylideneamino]imidazole-4-carboxamide. The protein operates within amino-acid biosynthesis; L-histidine biosynthesis; L-histidine from 5-phospho-alpha-D-ribose 1-diphosphate: step 3/9. In terms of biological role, catalyzes the hydrolysis of the adenine ring of phosphoribosyl-AMP. The polypeptide is Phosphoribosyl-AMP cyclohydrolase (Streptococcus thermophilus (strain ATCC BAA-491 / LMD-9)).